A 50-amino-acid chain; its full sequence is Large ribosomal subunit protein bL33 (50 aa).

It belongs to the bacterial ribosomal protein bL33 family.

The protein is Large ribosomal subunit protein bL33 (rpmG) of Aquifex aeolicus (strain VF5).